Consider the following 288-residue polypeptide: Methyltransferase ucsB (288 aa).

Residues Asp-87 and 121-122 (DA) each bind S-adenosyl-L-methionine.

The protein belongs to the class I-like SAM-binding methyltransferase superfamily.

Its pathway is mycotoxin biosynthesis. Its function is as follows. Methyltransferase; part of the gene cluster that mediates the biosynthesis of UCS1025A, a member of the pyrrolizidinone family that acts as a strong telomerase inhibitor and displays potent antibacterial and antitumor properties. These compounds share a hemiaminal-containing pyrrolizidinone core fused with a gamma-lactone, giving a furopyrrolizidine that is connected to a decalin fragment. The polyketide synthase module (PKS) of the PKS-NRPS ucsA is responsible for the synthesis of the polyketide backbone via the condensation of an acetyl-CoA starter unit with 6 malonyl-CoA units. The downstream nonribosomal peptide synthetase (NRPS) module then amidates the carboxyl end of the polyketide with a 2S,3S-methylproline derived from L-isoleucine by the 2-oxoglutarate-dependent dioxygenase ucsF which converts L-isoleucine to (4S,5S)-4-methylpyrroline-5-carboxylate that is further converted to 2S,3S-methylproline by the pyrroline-5-carboxylate reductase ucsG. Reductive release of the completed aminoacyl polyketide from the assembly line can form the 3-pyrrolin-2-one structure via an intramolecular Knoevenagel reaction. Because ucsA lacks a designated enoylreductase (ER) domain, the required activity is provided the enoyl reductase ucsL. This keto acyclic precursor is the substrate of the Diels-Alderase ucsH, that catalyzes the Diels-Alder cycloaddition. Oxidation of the 3S-methyl group to a carboxylate by the cytochrome P450 monooxygenase ucsK allows an oxa-Michael cyclization that might involve the reductase/dehydrogenase ucsI and which furnishes the furopyrrolizidine. The oxidase ucsJ likely plays a critical role in stereoselective reduction of the C5-C6 double bond to afford the required R-configured carboxylate group. Further enolization and oxidation at C5 by an unidentified enzyme affords the last intermediate that can undergo oxa-Michael cyclization to yield UCS1025A. The polypeptide is Methyltransferase ucsB (Acremonium sp).